The following is a 250-amino-acid chain: 2,3-bisphosphoglycerate-dependent phosphoglycerate mutase (250 aa).

Residues 10–17 (RHGESQWN), 23–24 (TG), Arg-62, 89–92 (ERHY), Lys-100, 116–117 (RR), and 185–186 (GN) contribute to the substrate site. His-11 (tele-phosphohistidine intermediate) is an active-site residue. Glu-89 (proton donor/acceptor) is an active-site residue.

It belongs to the phosphoglycerate mutase family. BPG-dependent PGAM subfamily. In terms of assembly, homodimer.

The enzyme catalyses (2R)-2-phosphoglycerate = (2R)-3-phosphoglycerate. It participates in carbohydrate degradation; glycolysis; pyruvate from D-glyceraldehyde 3-phosphate: step 3/5. Catalyzes the interconversion of 2-phosphoglycerate and 3-phosphoglycerate. This Pectobacterium atrosepticum (strain SCRI 1043 / ATCC BAA-672) (Erwinia carotovora subsp. atroseptica) protein is 2,3-bisphosphoglycerate-dependent phosphoglycerate mutase.